Consider the following 519-residue polypeptide: Histidine--tRNA ligase (519 aa).

This sequence belongs to the class-II aminoacyl-tRNA synthetase family. Homodimer.

It localises to the cytoplasm. The catalysed reaction is tRNA(His) + L-histidine + ATP = L-histidyl-tRNA(His) + AMP + diphosphate + H(+). The polypeptide is Histidine--tRNA ligase (Rhodopseudomonas palustris (strain BisB18)).